A 117-amino-acid chain; its full sequence is Large ribosomal subunit protein bL20 (117 aa).

The protein belongs to the bacterial ribosomal protein bL20 family.

In terms of biological role, binds directly to 23S ribosomal RNA and is necessary for the in vitro assembly process of the 50S ribosomal subunit. It is not involved in the protein synthesizing functions of that subunit. The sequence is that of Large ribosomal subunit protein bL20 (rplT) from Synechocystis sp. (strain ATCC 27184 / PCC 6803 / Kazusa).